The sequence spans 201 residues: Small ribosomal subunit protein uS4c (201 aa).

The 63-residue stretch at M89 to Y151 folds into the S4 RNA-binding domain.

The protein belongs to the universal ribosomal protein uS4 family. As to quaternary structure, part of the 30S ribosomal subunit. Contacts protein S5. The interaction surface between S4 and S5 is involved in control of translational fidelity.

The protein resides in the plastid. Its subcellular location is the chloroplast. Functionally, one of the primary rRNA binding proteins, it binds directly to 16S rRNA where it nucleates assembly of the body of the 30S subunit. With S5 and S12 plays an important role in translational accuracy. The sequence is that of Small ribosomal subunit protein uS4c (rps4) from Phaseolus vulgaris (Kidney bean).